Reading from the N-terminus, the 421-residue chain is MAESWLRLCGAGPGEEAGPEGGMEEPDALDDSLTSLQWLQEFSILNAKAPTLPPGGTDPHGYHQVPGLVAPGSPLAADPACLGQPHTPGKPTSSCTSRSAPPGLQAPPPDDVDYATNPHVKPPYSYATLICMAMQASKATKITLSAIYKWITDNFCYFRHADPTWQNSIRHNLSLNKCFIKVPREKDEPGKGGFWRIDPQYAERLLSGAFKKRRLPPVHIHPAFARQASQEPSAAPWGGPLTVNREAQQLLQEFEEATGEGGWGTGEGRLGHKRKQPLPKRVAKVLRPPSTLLLTQEEQGELEPLKGNFDWEAIFEAGALGEELSSLEGLELSPPLSPSSHGDVDLTVHGRHINCPATWGPPAEQAADSLDFDETFLATSFLQHPWDESGSGCLPPEPIFEAGDATLAADLQDWASVGAFL.

2 disordered regions span residues 1–32 and 77–110; these read MAESWLRLCGAGPGEEAGPEGGMEEPDALDDS and ADPACLGQPHTPGKPTSSCTSRSAPPGLQAPPPD. Residues 11–21 show a composition bias toward gly residues; it reads AGPGEEAGPEG. Positions 90-99 are enriched in polar residues; it reads KPTSSCTSRS. Residues 120–210 constitute a DNA-binding region (fork-head); it reads VKPPYSYATL…YAERLLSGAF (91 aa).

Belongs to the FOXJ1 family. As to expression, predominantly expressed in tissues containing motile cilia.

The protein localises to the nucleus. Transcription factor specifically required for the formation of motile cilia. Acts by activating transcription of genes that mediate assembly of motile cilia, such as CFAP157. Binds the DNA consensus sequences 5'-HWDTGTTTGTTTA-3' or 5'-KTTTGTTGTTKTW-3' (where H is not G, W is A or T, D is not C, and K is G or T). Activates the transcription of a variety of ciliary proteins in the developing brain and lung. The protein is Forkhead box protein J1 of Mus musculus (Mouse).